A 575-amino-acid chain; its full sequence is Urease subunit alpha (575 aa).

One can recognise a Urease domain in the interval 137–575; sequence GGIDCHIHFI…LPMTQRYFLF (439 aa). Residues His142, His144, and Lys225 each coordinate Ni(2+). Position 225 is an N6-carboxylysine (Lys225). His227 is a substrate binding site. 2 residues coordinate Ni(2+): His254 and His280. The Proton donor role is filled by His328. Asp368 serves as a coordination point for Ni(2+).

The protein belongs to the metallo-dependent hydrolases superfamily. Urease alpha subunit family. Heterotrimer of UreA (gamma), UreB (beta) and UreC (alpha) subunits. Three heterotrimers associate to form the active enzyme. Ni cation is required as a cofactor. Carboxylation allows a single lysine to coordinate two nickel ions.

The protein localises to the cytoplasm. The catalysed reaction is urea + 2 H2O + H(+) = hydrogencarbonate + 2 NH4(+). The protein operates within nitrogen metabolism; urea degradation; CO(2) and NH(3) from urea (urease route): step 1/1. This is Urease subunit alpha from Methylibium petroleiphilum (strain ATCC BAA-1232 / LMG 22953 / PM1).